The sequence spans 209 residues: MSDHHGPLRVGIGGPVGSGKTALMDLLCKSMRERYDIAAITNDIYTKWDAEFLVRSGSLTPDRIAGVETGGCPHTAIREDASMNLAAVAEMRSKFPGLDLVLIESGGDNLAATFSPELADITIYVIDVAAGDKIPSKGGPGITRSDLLVINKIDLAPYVGASLEKMDTDAKRMRGARPFVMTNLKKSEGLDRIIGFIEEKGGLTPRRSA.

A GTP-binding site is contributed by 14-21 (GPVGSGKT).

It belongs to the SIMIBI class G3E GTPase family. UreG subfamily. Homodimer. UreD, UreF and UreG form a complex that acts as a GTP-hydrolysis-dependent molecular chaperone, activating the urease apoprotein by helping to assemble the nickel containing metallocenter of UreC. The UreE protein probably delivers the nickel.

It localises to the cytoplasm. Functionally, facilitates the functional incorporation of the urease nickel metallocenter. This process requires GTP hydrolysis, probably effectuated by UreG. In Rhodopseudomonas palustris (strain ATCC BAA-98 / CGA009), this protein is Urease accessory protein UreG.